The sequence spans 403 residues: MRKFYTSESVSEGHPDKLADFISDSILDEFLRQEPTSRVAVETLVTTGMAVVAGEVRAITAHVDVQKTVRDAVMKVGYTRANYGFDAEYSAVLVSIHEQSPEIAEGVDHSEEWRGMSEAERALPENAYSLVGAGDQGLMFGYATDETPELMPLPISLAHQLTRRLAELRKNGTLPYLRPDAKAQVTVVRDGDVHDASETLVDTIVISTQHGEDVTQEQIRQDMLKHVIQAVIPAEYLTPDTKYFINPSGRFVIGGPHGDTGLTGRKIIVDTYGGAVPHGGGAFSGKDPTKVDRSAAYYARYIAKNIVAAGLARRALVEVAYAIGRAHPVSLRVDTYGTGTVSDERLAQLVEAHFDARPQAIIAQLDLQRPIYAQTAAYGHFGRPEFPWEQTDRAEALRQAAQG.

His-14 is a binding site for ATP. Position 16 (Asp-16) interacts with Mg(2+). Glu-42 contributes to the K(+) binding site. L-methionine-binding residues include Glu-55 and Gln-99. The interval 99-109 (QSPEIAEGVDH) is flexible loop. ATP is bound by residues 180-182 (DAK), 250-251 (RF), Asp-259, 265-266 (RK), Ala-282, and Lys-286. Asp-259 lines the L-methionine pocket. Residue Lys-290 participates in L-methionine binding.

This sequence belongs to the AdoMet synthase family. As to quaternary structure, homotetramer; dimer of dimers. The cofactor is Mg(2+). K(+) serves as cofactor.

Its subcellular location is the cytoplasm. It carries out the reaction L-methionine + ATP + H2O = S-adenosyl-L-methionine + phosphate + diphosphate. It participates in amino-acid biosynthesis; S-adenosyl-L-methionine biosynthesis; S-adenosyl-L-methionine from L-methionine: step 1/1. Catalyzes the formation of S-adenosylmethionine (AdoMet) from methionine and ATP. The overall synthetic reaction is composed of two sequential steps, AdoMet formation and the subsequent tripolyphosphate hydrolysis which occurs prior to release of AdoMet from the enzyme. This chain is S-adenosylmethionine synthase, found in Deinococcus deserti (strain DSM 17065 / CIP 109153 / LMG 22923 / VCD115).